Consider the following 158-residue polypeptide: C-type lectin mannose-binding isoform (158 aa).

Positions 1–20 are cleaved as a signal peptide; that stretch reads MGRFLLVTLSMLVVTFSLNE. Intrachain disulfides connect cysteine 26-cysteine 37, cysteine 54-cysteine 154, and cysteine 129-cysteine 146. A C-type lectin domain is found at 33–155; it reads KNGFCYKVFN…CEALYHFICQ (123 aa). The Mannose-binding motif lies at 119 to 121; sequence EPN. N-linked (GlcNAc...) asparagine glycosylation is present at asparagine 121. Glutamate 127, asparagine 142, and aspartate 143 together coordinate Ca(2+).

This sequence belongs to the true venom lectin family. As to quaternary structure, homodimer; disulfide-linked. In terms of tissue distribution, expressed by the venom gland.

It localises to the secreted. Functionally, mannose-binding lectin that binds to and agglutinates erythrocytes in a calcium-dependent manner. The chain is C-type lectin mannose-binding isoform from Notechis scutatus scutatus (Mainland tiger snake).